The sequence spans 237 residues: Ribosomal RNA small subunit methyltransferase G (237 aa).

Residues Gly-78, Phe-83, 129-130 (AE), and Arg-148 contribute to the S-adenosyl-L-methionine site. A disordered region spans residues 218 to 237 (KKETPNKYPRKAGMPNKRPL).

It belongs to the methyltransferase superfamily. RNA methyltransferase RsmG family.

It is found in the cytoplasm. Its function is as follows. Specifically methylates the N7 position of a guanine in 16S rRNA. The chain is Ribosomal RNA small subunit methyltransferase G from Streptococcus pneumoniae (strain JJA).